We begin with the raw amino-acid sequence, 351 residues long: UPF0421 protein BC_2748 (351 aa).

The next 4 membrane-spanning stretches (helical) occupy residues 19 to 39 (IAVF…IFAV), 74 to 94 (FTFF…FTIV), 109 to 129 (TLTA…AFLI), and 131 to 151 (LATT…IFPP).

Belongs to the UPF0421 family.

It is found in the cell membrane. This is UPF0421 protein BC_2748 from Bacillus cereus (strain ATCC 14579 / DSM 31 / CCUG 7414 / JCM 2152 / NBRC 15305 / NCIMB 9373 / NCTC 2599 / NRRL B-3711).